Consider the following 57-residue polypeptide: UPF0434 protein Shal_2504 (57 aa).

The protein belongs to the UPF0434 family.

This is UPF0434 protein Shal_2504 from Shewanella halifaxensis (strain HAW-EB4).